Reading from the N-terminus, the 935-residue chain is Progesterone receptor (935 aa).

The disordered stretch occupies residues 1–49 (MTELKAKGLRAPHVAGSPSSPKVGSPLPCRQATGQFPGSQTSDTLPEVS). Residues 1–164 (MTELKAKGLR…PATQRVLSPL (164 aa)) form an AF3; mediates transcriptional activation region. The segment at 1 to 568 (MTELKAKGLR…YSFESLPQKI (568 aa)) is modulating, Pro-Rich. Serine 20 carries the phosphoserine modification. A compositionally biased stretch (polar residues) spans 32-44 (ATGQFPGSQTSDT). An LXXL motif 1 motif is present at residues 55–59 (LDGLL). Positions 62–158 (RICQAQDPPD…EDPPAAPATQ (97 aa)) are disordered. Serine 81 carries the phosphoserine modification. The LXXL motif 2 signature appears at 115 to 119 (LDTLW). Phosphoserine occurs at positions 130 and 162. Residues 165-305 (MSRSGGKAGD…LATTVTDFIH (141 aa)) are mediates transcriptional transrepression. Positions 183-187 (KVLPR) match the Nuclear localization signal motif. The disordered stretch occupies residues 187 to 233 (RGLSPSRQLLLPTSGSPHWSGAPVKPSPQPAAVEVEEEDGSESEDSA). Serine 190 is subject to Phosphoserine. Polar residues predominate over residues 191 to 203 (PSRQLLLPTSGSP). At serine 213 the chain carries Phosphoserine. Residues 220–231 (EVEEEDGSESED) show a composition bias toward acidic residues. A Phosphoserine; by MAPK1 modification is found at serine 294. Residues 328-365 (SYDGGSGAASAFAPPRSSPSASSTPVPGSDFPDCAYAP) are disordered. Residues 335-356 (AASAFAPPRSSPSASSTPVPGS) are compositionally biased toward low complexity. The residue at position 345 (serine 345) is a Phosphoserine; by MAPK. Lysine 388 is covalently cross-linked (Glycyl lysine isopeptide (Lys-Gly) (interchain with G-Cter in SUMO); alternate). Residue lysine 388 forms a Glycyl lysine isopeptide (Lys-Gly) (interchain with G-Cter in ubiquitin); alternate linkage. Positions 390-452 (EEEGAEASTR…PASASVSSAS (63 aa)) are disordered. Serine 400 carries the phosphoserine; by CDK2 modification. Over residues 418–433 (PLGPPPPLPPRAPPSR) the composition is skewed to pro residues. Over residues 434–452 (PGEAAVTAAPASASVSSAS) the composition is skewed to low complexity. The AF1; mediates transcriptional activation stretch occupies residues 456–548 (STLECILYKA…VYPPYLNYLR (93 aa)). Lysine 533 is covalently cross-linked (Glycyl lysine isopeptide (Lys-Gly) (interchain with G-Cter in SUMO)). 2 consecutive NR C4-type zinc fingers follow at residues 569-589 (CLIC…CGSC) and 605-629 (CAGR…LRKC). Positions 569–641 (CLICGDEASG…AGMVLGGRKF (73 aa)) form a DNA-binding region, nuclear receptor. Residue serine 678 is modified to Phosphoserine. The 235-residue stretch at 681-915 (QDIQLIPPLI…EFPEMMSEVI (235 aa)) folds into the NR LBD domain. The interval 689-935 (LINLLLSIEP…MVKPLLFHKK (247 aa)) is AF2; mediates transcriptional activation. Arginine 768 contacts progesterone.

Belongs to the nuclear hormone receptor family. In terms of assembly, interacts with SMARD1 and UNC45A. Interacts with CUEDC2; the interaction promotes ubiquitination, decreases sumoylation, and represses transcriptional activity. Interacts with PIAS3; the interaction promotes sumoylation of PR in a hormone-dependent manner, inhibits DNA-binding, and alters nuclear export. Interacts with SP1; the interaction requires ligand-induced phosphorylation on Ser-345 by ERK1/2-MAPK. Interacts with PRMT2. Interacts with NCOA2 and NCOA1. Interacts with KLF9. Interacts with GTF2B. Post-translationally, phosphorylated on multiple serine sites. Several of these sites are hormone-dependent. Phosphorylation on Ser-294 is highly hormone-dependent and modulates ubiquitination and sumoylation on Lys-388. Phosphorylation on Ser-345 also requires induction by hormone. Basal phosphorylation on Ser-81, Ser-162, Ser-190 and Ser-400 is increased in response to progesterone and can be phosphorylated in vitro by the CDK2-A1 complex. Increased levels of phosphorylation on Ser-400 also in the presence of EGF, heregulin, IGF, PMA and FBS. Phosphorylation at this site by CDK2 is ligand-independent, and increases nuclear translocation and transcriptional activity. Phosphorylation at Ser-162 and Ser-294, but not at Ser-190, is impaired during the G(2)/M phase of the cell cycle. Phosphorylation on Ser-345 by ERK1/2 MAPK is required for interaction with SP1. In terms of processing, sumoylation is hormone-dependent and represses transcriptional activity. Sumoylation on all three sites is enhanced by PIAS3. Desumoylated by SENP1. Sumoylation on Lys-388, the main site of sumoylation, is repressed by ubiquitination on the same site, and modulated by phosphorylation at Ser-294. Ubiquitination is hormone-dependent and represses sumoylation on the same site. Promoted by MAPK-mediated phosphorylation on Ser-294. Ubiquitinated by UBR5, leading to its degradation: UBR5 specifically recognizes and binds ligand-bound PGR when it is not associated with coactivators (NCOAs). In presence of NCOAs, the UBR5-degron is not accessible, preventing its ubiquitination and degradation. Post-translationally, palmitoylated by ZDHHC7 and ZDHHC21. Palmitoylation is required for plasma membrane targeting and for rapid intracellular signaling via ERK and AKT kinases and cAMP generation.

The protein resides in the nucleus. The protein localises to the cytoplasm. In terms of biological role, the steroid hormones and their receptors are involved in the regulation of eukaryotic gene expression and affect cellular proliferation and differentiation in target tissues. Transcriptional activator of several progesteron-dependent promoters in a variety of cell types. Involved in activation of SRC-dependent MAPK signaling on hormone stimulation. The sequence is that of Progesterone receptor (PGR) from Sapajus apella (Brown-capped capuchin).